Consider the following 555-residue polypeptide: Glutamine--tRNA ligase (555 aa).

The 'HIGH' region signature appears at 35–45 (PEPNGYLHIGH). ATP-binding positions include 36 to 38 (EPN) and 42 to 48 (HIGHAKS). Asp68 and Tyr213 together coordinate L-glutamine. Residues Thr232 and 262–263 (RL) contribute to the ATP site. A 'KMSKS' region motif is present at residues 269-273 (ITSKR).

The protein belongs to the class-I aminoacyl-tRNA synthetase family. Monomer.

The protein resides in the cytoplasm. The catalysed reaction is tRNA(Gln) + L-glutamine + ATP = L-glutaminyl-tRNA(Gln) + AMP + diphosphate. This is Glutamine--tRNA ligase from Stutzerimonas stutzeri (strain A1501) (Pseudomonas stutzeri).